A 171-amino-acid polypeptide reads, in one-letter code: LIM domain transcription factor LMO4-A (171 aa).

Positions 1 to 19 (MVNNRSSESTTTAVSSNGS) are enriched in polar residues. The tract at residues 1–21 (MVNNRSSESTTTAVSSNGSPP) is disordered. LIM zinc-binding domains lie at 22-84 (KACA…LFGN) and 86-148 (GACN…GLLN).

In terms of tissue distribution, at the start of gastrulation (stage 10), expressed in the mesodermal marginal zone. Shortly after (stage 11), expression is down-regulated in the dorsal most region. During neurulation, expressed in the neural plate and ventral epidermis. At late neurula stages, also expressed more rostrally, and then in the brain, migrating neural crests and ventral epidermis.

Its function is as follows. Acts as a positive cofactor of GATA transcription factors to establish the identity of the ventral mesoderm during gastrulation. Down-regulation in the dorsal mesoderm is necessary for the proper formation of this territory since, when present, lmo4 may bind ldb1 and restrict the availability of this cofactor for Spemman organizer transcription factors. At neurula stages, suppresses primary neuron differentiation and modulates gene expression at the Isthmic Organizer of the midbrain-hindbrain boundary. This chain is LIM domain transcription factor LMO4-A (lmo4-a), found in Xenopus laevis (African clawed frog).